Consider the following 116-residue polypeptide: U3-theraphotoxin-Lsp1a (116 aa).

An N-terminal signal peptide occupies residues 1-17 (MKLSTFIIMISLAVALA). A propeptide spanning residues 18–50 (TWPSEHIEGSDSETKLNVELGPYALADRAEKGK) is cleaved from the precursor.

Belongs to the neurotoxin 25 family. F7 subfamily. In terms of processing, contains 3 disulfide bonds. In terms of tissue distribution, expressed by the venom gland.

It is found in the secreted. The protein is U3-theraphotoxin-Lsp1a of Lasiodora sp. (strain IBSP 8539) (Brazilian salmon pink birdeater).